A 505-amino-acid polypeptide reads, in one-letter code: Maturase K (505 aa).

This sequence belongs to the intron maturase 2 family. MatK subfamily.

It localises to the plastid. Its subcellular location is the chloroplast. In terms of biological role, usually encoded in the trnK tRNA gene intron. Probably assists in splicing its own and other chloroplast group II introns. In Silene otites (Spanish catchfly), this protein is Maturase K.